The following is a 390-amino-acid chain: Levoglucosan dehydrogenase (390 aa).

NADH-binding residues include phenylalanine 13, methionine 14, glutamate 43, threonine 81, asparagine 83, histidine 86, glutamate 103, lysine 104, alanine 130, and asparagine 132. Lysine 104 is a binding site for levoglucosan. Positions 133 and 163 each coordinate levoglucosan. Residues tryptophan 175 and arginine 176 each coordinate NADH. The levoglucosan site is built by arginine 176, aspartate 189, and histidine 193. Tyrosine 335 contacts NADH.

Belongs to the Gfo/Idh/MocA family. Homotetramer.

It carries out the reaction levoglucosan + NAD(+) = 3-dehydrolevoglucosan + NADH + H(+). Functionally, catalyzes the oxidation of levoglucosan (1,6-anhydro-beta-D-glucose, LG) to 3-dehydrolevoglucosan (3-keto-LG). Exhibits high substrate specificity toward levoglucosan and NAD(+) for the oxidative reaction. Exhibits weak activities (about 4% compared with that of LG) toward L-sorbose and 1,5-anhydro-D-glucitol, and activity toward D-xylose is also detectable (1.7%). Can also efficiently catalyzes the NADH-dependent reduction (reverse reaction) of 3-keto-LG. This is Levoglucosan dehydrogenase from Pseudarthrobacter phenanthrenivorans (strain DSM 18606 / JCM 16027 / LMG 23796 / Sphe3) (Arthrobacter phenanthrenivorans).